The following is a 258-amino-acid chain: Flagellar L-ring protein (258 aa).

The signal sequence occupies residues 1–15; it reads MKRIVCLALFLSMTG. Cys-16 is lipidated: N-palmitoyl cysteine. Cys-16 carries the S-diacylglycerol cysteine lipid modification.

The protein belongs to the FlgH family. In terms of assembly, the basal body constitutes a major portion of the flagellar organelle and consists of four rings (L,P,S, and M) mounted on a central rod.

Its subcellular location is the cell outer membrane. The protein localises to the bacterial flagellum basal body. Functionally, assembles around the rod to form the L-ring and probably protects the motor/basal body from shearing forces during rotation. The chain is Flagellar L-ring protein from Vibrio atlanticus (strain LGP32) (Vibrio splendidus (strain Mel32)).